We begin with the raw amino-acid sequence, 111 residues long: Macrodomain Ori protein (111 aa).

Belongs to the MaoP family.

In terms of biological role, involved in the organization of the Ori region of the chromosome into a macrodomain (MD). It constrains DNA mobility in the Ori macrodomain and limits long-distance DNA interactions with other chromosomal regions. This is Macrodomain Ori protein from Haemophilus influenzae (strain ATCC 51907 / DSM 11121 / KW20 / Rd).